Here is a 178-residue protein sequence, read N- to C-terminus: ATP synthase subunit delta (178 aa).

This sequence belongs to the ATPase delta chain family. In terms of assembly, F-type ATPases have 2 components, F(1) - the catalytic core - and F(0) - the membrane proton channel. F(1) has five subunits: alpha(3), beta(3), gamma(1), delta(1), epsilon(1). F(0) has three main subunits: a(1), b(2) and c(10-14). The alpha and beta chains form an alternating ring which encloses part of the gamma chain. F(1) is attached to F(0) by a central stalk formed by the gamma and epsilon chains, while a peripheral stalk is formed by the delta and b chains.

It localises to the cell inner membrane. Functionally, f(1)F(0) ATP synthase produces ATP from ADP in the presence of a proton or sodium gradient. F-type ATPases consist of two structural domains, F(1) containing the extramembraneous catalytic core and F(0) containing the membrane proton channel, linked together by a central stalk and a peripheral stalk. During catalysis, ATP synthesis in the catalytic domain of F(1) is coupled via a rotary mechanism of the central stalk subunits to proton translocation. This protein is part of the stalk that links CF(0) to CF(1). It either transmits conformational changes from CF(0) to CF(1) or is implicated in proton conduction. The chain is ATP synthase subunit delta from Ectopseudomonas mendocina (strain ymp) (Pseudomonas mendocina).